The chain runs to 901 residues: Protein translocase subunit SecA (901 aa).

ATP contacts are provided by residues glutamine 87, 105-109 (GEGKT), and aspartate 512. Residues cysteine 885, cysteine 887, cysteine 896, and histidine 897 each coordinate Zn(2+).

The protein belongs to the SecA family. In terms of assembly, monomer and homodimer. Part of the essential Sec protein translocation apparatus which comprises SecA, SecYEG and auxiliary proteins SecDF-YajC and YidC. The cofactor is Zn(2+).

Its subcellular location is the cell inner membrane. It is found in the cytoplasm. The catalysed reaction is ATP + H2O + cellular proteinSide 1 = ADP + phosphate + cellular proteinSide 2.. Functionally, part of the Sec protein translocase complex. Interacts with the SecYEG preprotein conducting channel. Has a central role in coupling the hydrolysis of ATP to the transfer of proteins into and across the cell membrane, serving both as a receptor for the preprotein-SecB complex and as an ATP-driven molecular motor driving the stepwise translocation of polypeptide chains across the membrane. This Salmonella paratyphi A (strain ATCC 9150 / SARB42) protein is Protein translocase subunit SecA.